Reading from the N-terminus, the 412-residue chain is 43 kDa receptor-associated protein of the synapse (412 aa).

A lipid anchor (N-myristoyl glycine) is attached at Gly2. 7 TPR repeats span residues 6–39, 83–116, 123–156, 163–196, 206–239, 246–279, and 286–319; these read TKQQIEKGLQLYQANETGKALEIWQQVVERSTEL, TEAYLNLARGHEKLCEFSEAVAYCRTCLGAEGGP, GQVCLSMGNAFLGLSAFQKALECFEKALRYAHGN, CRVCCSLGAFYVQLKDYEKALFFPCKSAELVADY, AMSRYHMAAAYRKLGRMDDAMECCEESMKIALQH, ALCLLCFADIHRHRSDIGKALPRYESSLNIMTEI, and AHVLLNIAKCWMTEKKLDKTLGVVQKAEELADAV. At Tyr196 the chain carries Phosphotyrosine. The segment at 363-403 adopts an RING-type zinc-finger fold; the sequence is CGLCGESIGDQNSQLQALPCSHLFHLKCLQTNGNRGCPNCK. Ser405 carries the phosphoserine modification.

This sequence belongs to the RAPsyn family.

Its subcellular location is the cell membrane. It is found in the postsynaptic cell membrane. It localises to the cytoplasm. The protein resides in the cytoskeleton. Postsynaptic protein required for clustering of nicotinic acetylcholine receptors (nAChRs) at the neuromuscular junction. It may link the receptor to the underlying postsynaptic cytoskeleton, possibly by direct association with actin or spectrin. This is 43 kDa receptor-associated protein of the synapse (RAPSN) from Tetronarce californica (Pacific electric ray).